The following is a 148-amino-acid chain: Protein NrdI (148 aa).

It belongs to the NrdI family.

Probably involved in ribonucleotide reductase function. This Mycolicibacterium gilvum (strain PYR-GCK) (Mycobacterium gilvum (strain PYR-GCK)) protein is Protein NrdI.